We begin with the raw amino-acid sequence, 78 residues long: Sec-independent protein translocase protein TatA (78 aa).

Residues 4 to 21 (SFQHILILLVVVLLLFGR) form a helical membrane-spanning segment. The interval 49-78 (TAKSDSIKTIDNTGKPTNVQANPQRQDSTV) is disordered. Residues 57–78 (TIDNTGKPTNVQANPQRQDSTV) are compositionally biased toward polar residues.

This sequence belongs to the TatA/E family. In terms of assembly, the Tat system comprises two distinct complexes: a TatABC complex, containing multiple copies of TatA, TatB and TatC subunits, and a separate TatA complex, containing only TatA subunits. Substrates initially bind to the TatABC complex, which probably triggers association of the separate TatA complex to form the active translocon.

The protein localises to the cell inner membrane. Its function is as follows. Part of the twin-arginine translocation (Tat) system that transports large folded proteins containing a characteristic twin-arginine motif in their signal peptide across membranes. TatA could form the protein-conducting channel of the Tat system. The polypeptide is Sec-independent protein translocase protein TatA (Afipia carboxidovorans (strain ATCC 49405 / DSM 1227 / KCTC 32145 / OM5) (Oligotropha carboxidovorans)).